We begin with the raw amino-acid sequence, 179 residues long: Large ribosomal subunit protein uL5 (179 aa).

It belongs to the universal ribosomal protein uL5 family. In terms of assembly, part of the 50S ribosomal subunit; part of the 5S rRNA/L5/L18/L25 subcomplex. Contacts the 5S rRNA and the P site tRNA. Forms a bridge to the 30S subunit in the 70S ribosome.

In terms of biological role, this is one of the proteins that bind and probably mediate the attachment of the 5S RNA into the large ribosomal subunit, where it forms part of the central protuberance. In the 70S ribosome it contacts protein S13 of the 30S subunit (bridge B1b), connecting the 2 subunits; this bridge is implicated in subunit movement. Contacts the P site tRNA; the 5S rRNA and some of its associated proteins might help stabilize positioning of ribosome-bound tRNAs. This Staphylococcus aureus (strain MW2) protein is Large ribosomal subunit protein uL5.